Reading from the N-terminus, the 240-residue chain is MGTTGTNDGATTPPANTSTPAVDIDVRDLGTVDYEDTWHLQANLAAQRAEEKIPDTILLLQHPPTYTAGKRTQDSDRPTNGLPVVDVDRGGRITWHGPGQLVAYPIIKLADPVDVVDYVRRLEQALIQTCEDLGLHGTGRVEGRSGVWLPAGVINGELKPARKIAAIGIRVTRGVTMHGVALNCDNTMEYYDHIVPCGLADAGVTTLTEELGRDVSVSDAYSSLAHNLVDALNGDLPVHS.

The disordered stretch occupies residues 1-22 (MGTTGTNDGATTPPANTSTPAV). The segment covering 10 to 21 (ATTPPANTSTPA) has biased composition (low complexity). In terms of domain architecture, BPL/LPL catalytic spans 51–236 (EKIPDTILLL…NLVDALNGDL (186 aa)). Substrate is bound by residues 89–96 (RGGRITWH), 166–168 (AIG), and 179–181 (GVA). The Acyl-thioester intermediate role is filled by C197.

It belongs to the LipB family.

The protein localises to the cytoplasm. The enzyme catalyses octanoyl-[ACP] + L-lysyl-[protein] = N(6)-octanoyl-L-lysyl-[protein] + holo-[ACP] + H(+). Its pathway is protein modification; protein lipoylation via endogenous pathway; protein N(6)-(lipoyl)lysine from octanoyl-[acyl-carrier-protein]: step 1/2. Catalyzes the transfer of endogenously produced octanoic acid from octanoyl-acyl-carrier-protein onto the lipoyl domains of lipoate-dependent enzymes. Lipoyl-ACP can also act as a substrate although octanoyl-ACP is likely to be the physiological substrate. In Corynebacterium jeikeium (strain K411), this protein is Octanoyltransferase.